Consider the following 35-residue polypeptide: Photosystem II reaction center protein M (35 aa).

Residues 5-25 traverse the membrane as a helical segment; that stretch reads ILAFIATALFILVPTAFLLII.

It belongs to the PsbM family. In terms of assembly, PSII is composed of 1 copy each of membrane proteins PsbA, PsbB, PsbC, PsbD, PsbE, PsbF, PsbH, PsbI, PsbJ, PsbK, PsbL, PsbM, PsbT, PsbX, PsbY, PsbZ, Psb30/Ycf12, at least 3 peripheral proteins of the oxygen-evolving complex and a large number of cofactors. It forms dimeric complexes.

Its subcellular location is the plastid. The protein resides in the chloroplast thylakoid membrane. Its function is as follows. One of the components of the core complex of photosystem II (PSII). PSII is a light-driven water:plastoquinone oxidoreductase that uses light energy to abstract electrons from H(2)O, generating O(2) and a proton gradient subsequently used for ATP formation. It consists of a core antenna complex that captures photons, and an electron transfer chain that converts photonic excitation into a charge separation. This subunit is found at the monomer-monomer interface. The chain is Photosystem II reaction center protein M from Panax quinquefolius (American ginseng).